The sequence spans 436 residues: MVLPTVAIVGRPNVGKSTLFNRIAGERISIVEDVEGVTRDRIYTTGEWLNRKFSLIDTGGIDDVDAPFMEQIKHQADIAMTEADVIVFVVSGKEGVTDADEYVSRILYKTNKPVILAVNKVDNPEMRNDIYDFYSLGLGDPYPLSSVHGIGTGDILDAIVENLPVEEENENPDIIRFSLIGRPNVGKSSLINAILGEDRVIASPVAGTTRDAIDTNFVDSQGQEYTMIDTAGMRKSGKVYENTEKYSVMRSMRAIDRSDVVLMVINAEEGIREYDKRIAGFAHETGKGIIIVVNKWDTIEKDNHTVSQWEADIRDNFQFLSYAPIIFVSAETKQRLHKLPDMIKRISESQNKRIPSAVLNDVIMDAIAINPTPTDKGKRLKIFYATQVAVKPPTFVVFVNEEELMHFSYLRFLENQIREAFVFEGTPINLIARKRK.

2 EngA-type G domains span residues proline 4–glutamate 167 and isoleucine 175–asparagine 351. GTP contacts are provided by residues glycine 10–serine 17, aspartate 57–isoleucine 61, asparagine 119–aspartate 122, glycine 181–serine 188, aspartate 229–methionine 233, and asparagine 294–aspartate 297. Residues lysine 352 to lysine 436 form the KH-like domain.

Belongs to the TRAFAC class TrmE-Era-EngA-EngB-Septin-like GTPase superfamily. EngA (Der) GTPase family. As to quaternary structure, associates with the 50S ribosomal subunit.

In terms of biological role, GTPase that plays an essential role in the late steps of ribosome biogenesis. The chain is GTPase Der from Streptococcus agalactiae serotype Ia (strain ATCC 27591 / A909 / CDC SS700).